A 200-amino-acid polypeptide reads, in one-letter code: Recombination protein RecR (200 aa).

The segment at 60–75 (CVYCQALTEDDVCNIC) adopts a C4-type zinc-finger fold. The 95-residue stretch at 83 to 177 (TKLCIIESML…KISRIGFGVP (95 aa)) folds into the Toprim domain.

The protein belongs to the RecR family.

Functionally, may play a role in DNA repair. It seems to be involved in an RecBC-independent recombinational process of DNA repair. It may act with RecF and RecO. The sequence is that of Recombination protein RecR from Francisella tularensis subsp. mediasiatica (strain FSC147).